A 543-amino-acid chain; its full sequence is Sarafotoxin (543 aa).

Residues 1-23 (MALLPRLAAGGLLLLLALAALEG) form the signal peptide. Positions 24 to 69 (KPAPSALSQLLEKRSEDQAAAGRIIDGGDTKQAARDPSPQRNVEPL) are excised as a propeptide. The disordered stretch occupies residues 45 to 65 (GRIIDGGDTKQAARDPSPQRN). 12 consecutive repeat copies span residues 51–90 (GDTKQAARDPSPQRNVEPLCSCKDMSDKECLNFCHQDVIW), 91–130 (RDTKQAARDPSPQRNVEPLCTCNDMTDEECLNFCHQDVIW), 131–170 (RDTKQAARDPSPQRNVEPLCSCKDMTDKECLYFCHQDVIW), 171–210 (RDTKQAARDPSPQRNVEPLCTCNDMTDEECLNFCHQDVIW), 211–250 (RDTKQAARDPSPQRNVEPLCTCNDMTDEECLNFCHQDVIW), 251–290 (RDTKQAARDPSPQRNVEPLCTCKDMTDKECLYFCHQGIIW), 291–330 (RDTKQAARDPSPQRNVEPLCSCKDMSDKECLNFCHQDVIW), 331–370 (RDTKQAARDPSPQRNVEPLCTCNDMTDEECLNFCHQDVIW), 371–410 (RDTKQAARDPSPQRNVEPLCTCNDMTDEECLNFCHQDVIW), 411–450 (RDTKQAARDPSPQRNVEPLCSCKDMTDKECLYFCHQDVIW), 451–490 (RDTKQAARDPSPQRNVEPLCSCKDMSDKECLNFCHQDVIW), and 491–530 (RDTKQAARDPSPQRNVEPLCSCKDMTDKECLNFCHQDVIW). A 12 X 40 AA tandem repeats region spans residues 51-530 (GDTKQAARDP…LNFCHQDVIW (480 aa)). 2 disulfide bridges follow: Cys-70-Cys-84 and Cys-72-Cys-80. The propeptide occupies 92 to 109 (DTKQAARDPSPQRNVEPL). 2 disulfide bridges follow: Cys-110–Cys-124 and Cys-112–Cys-120. Positions 132 to 149 (DTKQAARDPSPQRNVEPL) are excised as a propeptide. Cystine bridges form between Cys-150–Cys-164 and Cys-152–Cys-160. Positions 172-189 (DTKQAARDPSPQRNVEPL) are excised as a propeptide. 2 disulfides stabilise this stretch: Cys-190–Cys-204 and Cys-192–Cys-200. Residues 212–229 (DTKQAARDPSPQRNVEPL) constitute a propeptide that is removed on maturation. Intrachain disulfides connect Cys-230–Cys-244 and Cys-232–Cys-240. Positions 252-269 (DTKQAARDPSPQRNVEPL) are excised as a propeptide. Cystine bridges form between Cys-270–Cys-284 and Cys-272–Cys-280. Residues 292-309 (DTKQAARDPSPQRNVEPL) constitute a propeptide that is removed on maturation. Disulfide bonds link Cys-310–Cys-324 and Cys-312–Cys-320. Positions 332-349 (DTKQAARDPSPQRNVEPL) are excised as a propeptide. 2 cysteine pairs are disulfide-bonded: Cys-350–Cys-364 and Cys-352–Cys-360. Positions 372-389 (DTKQAARDPSPQRNVEPL) are excised as a propeptide. 2 cysteine pairs are disulfide-bonded: Cys-390/Cys-404 and Cys-392/Cys-400. Residues 412–429 (DTKQAARDPSPQRNVEPL) constitute a propeptide that is removed on maturation. 2 disulfide bridges follow: Cys-430–Cys-444 and Cys-432–Cys-440. Positions 452–469 (DTKQAARDPSPQRNVEPL) are excised as a propeptide. 2 disulfide bridges follow: Cys-470-Cys-484 and Cys-472-Cys-480. Positions 492–509 (DTKQAARDPSPQRNVEPL) are excised as a propeptide. 2 disulfides stabilise this stretch: Cys-510–Cys-524 and Cys-512–Cys-520. A propeptide spanning residues 532-543 (NADTSANPEFLG) is cleaved from the precursor.

Belongs to the endothelin/sarafotoxin family. In terms of tissue distribution, expressed by the venom gland.

The protein resides in the secreted. Vasoconstrictor activity. These toxins cause cardiac arrest probably as a result of coronary vasospasm. Functionally, vasoconstrictor activity. Causes cardiac arrest probably as a result of coronary vasospasm. Displays high agonistic activities towards endothelin-2 receptor (EDNRB) (displays affinity in the picomolar range) and endothelin-1 receptor (EDNRA) (lower affinities). The chain is Sarafotoxin from Atractaspis engaddensis (Israeli burrowing asp).